Here is a 493-residue protein sequence, read N- to C-terminus: Inosine-5'-monophosphate dehydrogenase (493 aa).

CBS domains follow at residues 97 to 155 (VIID…NAPI) and 159 to 219 (MTSE…AKDE). NAD(+) contacts are provided by residues aspartate 253 and 303-305 (GIG). Residues glycine 305 and glycine 307 each coordinate K(+). Serine 308 is a binding site for IMP. A K(+)-binding site is contributed by cysteine 310. Cysteine 310 serves as the catalytic Thioimidate intermediate. Residues 343 to 345 (DGG), 366 to 367 (GS), and 390 to 394 (YRGMG) each bind IMP. Catalysis depends on arginine 406, which acts as the Proton acceptor. Position 421 (glutamate 421) interacts with IMP. Glutamate 475, serine 476, and histidine 477 together coordinate K(+).

This sequence belongs to the IMPDH/GMPR family. In terms of assembly, homotetramer. The cofactor is K(+).

It catalyses the reaction IMP + NAD(+) + H2O = XMP + NADH + H(+). It functions in the pathway purine metabolism; XMP biosynthesis via de novo pathway; XMP from IMP: step 1/1. Mycophenolic acid (MPA) is a non-competitive inhibitor that prevents formation of the closed enzyme conformation by binding to the same site as the amobile flap. In contrast, mizoribine monophosphate (MZP) is a competitive inhibitor that induces the closed conformation. MPA is a potent inhibitor of mammalian IMPDHs but a poor inhibitor of the bacterial enzymes. MZP is a more potent inhibitor of bacterial IMPDH. In terms of biological role, catalyzes the conversion of inosine 5'-phosphate (IMP) to xanthosine 5'-phosphate (XMP), the first committed and rate-limiting step in the de novo synthesis of guanine nucleotides, and therefore plays an important role in the regulation of cell growth. The polypeptide is Inosine-5'-monophosphate dehydrogenase (Streptococcus pyogenes serotype M3 (strain ATCC BAA-595 / MGAS315)).